A 203-amino-acid polypeptide reads, in one-letter code: HTH-type transcriptional regulator BetI (203 aa).

Positions 8–68 constitute an HTH tetR-type domain; the sequence is PVRRKALVDA…ATIRSLLGKL (61 aa). Positions 31–50 form a DNA-binding region, H-T-H motif; the sequence is TMSEIARTAGVSPALAHHYF.

The protein operates within amine and polyamine biosynthesis; betaine biosynthesis via choline pathway [regulation]. In terms of biological role, repressor involved in the biosynthesis of the osmoprotectant glycine betaine. It represses transcription of the choline transporter BetT and the genes of BetAB involved in the synthesis of glycine betaine. In Rhizobium meliloti (strain 1021) (Ensifer meliloti), this protein is HTH-type transcriptional regulator BetI.